The sequence spans 571 residues: Calcium-dependent protein kinase 16 (571 aa).

The segment at 1 to 74 (MGLCFSSAAK…TRHTPPHGKV (74 aa)) is disordered. Gly-2 carries N-myristoyl glycine lipidation. Residue Cys-4 is the site of S-palmitoyl cysteine attachment. Basic residues predominate over residues 63–72 (TPTRHTPPHG). The Protein kinase domain maps to 108–368 (YTIGKLLGHG…AAQALSHPWV (261 aa)). Residues 114–122 (LGHGQFGYT) and Lys-137 contribute to the ATP site. The Proton acceptor role is filled by Asp-234. Ser-274 carries the phosphoserine modification. Residues 374–404 (ASEIPIDISVLNNMRQFVKFSRLKQFALRAL) form an autoinhibitory domain region. EF-hand domains are found at residues 411–446 (EELA…DHPW), 448–483 (LKDA…VNQL), 490–525 (KWQQ…KGSI), and 528–555 (LLEE…ASIK). Residues Asp-424, Asp-426, Asn-428, Glu-435, Asp-461, Asn-463, Asp-465, Glu-472, Asp-503, Asp-505, Asp-507, Glu-514, Asp-533, Asp-535, Asp-537, and Lys-539 each contribute to the Ca(2+) site. Ser-541 is modified (phosphoserine). Glu-544 contacts Ca(2+).

The protein belongs to the protein kinase superfamily. Ser/Thr protein kinase family. CDPK subfamily.

The protein resides in the cell membrane. The protein localises to the nucleus. It carries out the reaction L-seryl-[protein] + ATP = O-phospho-L-seryl-[protein] + ADP + H(+). It catalyses the reaction L-threonyl-[protein] + ATP = O-phospho-L-threonyl-[protein] + ADP + H(+). Its activity is regulated as follows. Activated by calcium. Autophosphorylation may play an important role in the regulation of the kinase activity. May play a role in signal transduction pathways that involve calcium as a second messenger. The sequence is that of Calcium-dependent protein kinase 16 (CPK16) from Arabidopsis thaliana (Mouse-ear cress).